Reading from the N-terminus, the 2472-residue chain is Centrosomal protein of 290 kDa (2472 aa).

Residues 1 to 689 (MPPNIKWKEL…MESKNAEGIF (689 aa)) form a self-association (with itself or C-terminus) region. Coiled-coil stretches lie at residues 59–747 (MKMK…LRQS), 1129–1392 (RQRI…QQSK), and 1459–1492 (QVIL…ILSR). The segment at 128–164 (DRELEDMEKELDKEKKVNEQLALRNEEAENENSKLRR) is disordered. Positions 137–164 (ELDKEKKVNEQLALRNEEAENENSKLRR) are enriched in basic and acidic residues. The segment at 690–890 (DASLHLKAQV…TVLQVNEKSL (201 aa)) is interaction with IQCB1. Disordered stretches follow at residues 1691–1713 (AHKD…SRAP) and 2451–2472 (PSPL…FPIY). Residues 1697–1713 (SLKSELQAQKEANSRAP) show a composition bias toward polar residues. The interval 1960 to 2472 (TTGMTVDQVL…GESPHSFPIY (513 aa)) is self-association (with itself or N-terminus).

In terms of assembly, part of the tectonic-like complex (also named B9 complex). Interacts with ATF4 via its N-terminal region. Associates with the BBSome complex, interacting (via N-terminus) with BBS4. Interacts with IQCB1/NPHP5; IQCB1 and CEP290/NPHP6 are proposed to form a functional NPHP5-6 module localized to the centrosome. Interacts with NPHP4; the interaction likely requires additional interactors. Interacts with ZNF423, FAM161A, CEP162, CEP162, CEP131, TALPID3, CCDC13, CC2D2A, RPGRIP1. Can self-associate (homo- or heteromeric). Interacts with CCP110; required for suppressing cilia formation. Interacts with RPGR. Associates (via C-terminus) with microtubules; association to microtubule is reduced in response to cellular stress, such as ultraviolet light (UV) radiation or heat shock, in a process that requires p38 MAP kinase signaling. Interacts with FAM161A. Interacts with PCM1. Interacts with CCDC66. Interacts with ARMC9 and CSPP1. In terms of processing, ubiquitinated. May undergo monoubiquitination; monoubiquitination is inhibited in response to cellular stress, such as ultraviolet light (UV) radiation or heat shock, but does not cause its displacement from centriolar satellites. As to expression, expressed in multiple organs during early postnatal development, with highest levels in hindbrain.

The protein localises to the cytoplasm. It localises to the cytoskeleton. It is found in the microtubule organizing center. The protein resides in the centrosome. Its subcellular location is the centriolar satellite. The protein localises to the nucleus. It localises to the centriole. It is found in the cell projection. The protein resides in the cilium. Its subcellular location is the cilium basal body. The protein localises to the cytoplasmic vesicle. Involved in early and late steps in cilia formation. Its association with CCP110 is required for inhibition of primary cilia formation by CCP110. May play a role in early ciliogenesis in the disappearance of centriolar satellites and in the transition of primary ciliar vesicles (PCVs) to capped ciliary vesicles (CCVs). Required for the centrosomal recruitment of RAB8A and for the targeting of centriole satellite proteins to centrosomes such as of PCM1. Required for the correct localization of ciliary and phototransduction proteins in retinal photoreceptor cells; may play a role in ciliary transport processes. Required for efficient recruitment of RAB8A to primary cilium. In the ciliary transition zone is part of the tectonic-like complex (also named B9 complex) which is required for tissue-specific ciliogenesis and may regulate ciliary membrane composition. Involved in regulation of the BBSome complex integrity, specifically for presence of BBS2, BBS5 and BBS8/TTC8 in the complex, and in ciliary targeting of selected BBSome cargos. May play a role in controlling entry of the BBSome complex to cilia possibly implicating IQCB1/NPHP5. Activates ATF4-mediated transcription. In Mus musculus (Mouse), this protein is Centrosomal protein of 290 kDa.